The following is a 205-amino-acid chain: MALYVSMVWRKILRKRWVLGVVFGLSLIYFLTSTFKQEERTVRDRMLLQTGDQDQNLQWKVQFNLGNSSRISNQCRNSVQGKLLVTDDMGYICERKELLANGCCNINVASTKLYSCETCLPNGCCSVYEFCVSCCLQPNKQLQLERFLNKAAVAFQNLFQAVEDHFELCLAKCRTSSQSVQHENTYRNPIAKHCYGESPPELLPI.

Residues 1 to 16 (MALYVSMVWRKILRKR) lie on the Cytoplasmic side of the membrane. A helical membrane pass occupies residues 17–35 (WVLGVVFGLSLIYFLTSTF). Topologically, residues 36 to 205 (KQEERTVRDR…GESPPELLPI (170 aa)) are lumenal. Asn-67 carries an N-linked (GlcNAc...) asparagine glycan.

The protein belongs to the SPRING family.

Its subcellular location is the golgi apparatus membrane. Its function is as follows. Positively regulates hepatic SREBP signaling pathway by modulating the proper localization of SCAP (SREBP cleavage-activating protein) to the endoplasmic reticulum, thereby controlling the level of functional SCAP. The sequence is that of SREBP regulating gene protein from Xenopus laevis (African clawed frog).